Here is a 318-residue protein sequence, read N- to C-terminus: MLDTLLPFKRHFLSRNGNKLHYINEGQGEPVVMVHGNPSWSFYYRNLVSALKDTHQCIVPDHIGCGLSDKPDDSGYDYTLKNRIDDLEALLDSLNVKENITLVVHDWGGMIGMGYAARYPERIKRLVILNTGAFHLPDTKPLPLALWICRNTLLGTVLVRGFNAFSSIASYVGVKRQPMSKYIREAYVAPFNSWANRISTLRFVQDIPLKPGDRNYQLVSDIAASLPKFAKVPTLICWGLQDFVFDKHFLVKWREHMPHAQVHEFADCGHYILEDASDEVITHIKHFMTETETLATQVNPADSITEFESASQAPQAER.

In terms of domain architecture, AB hydrolase-1 spans 30 to 275; that stretch reads PVVMVHGNPS…ADCGHYILED (246 aa).

It belongs to the AB hydrolase superfamily.

The catalysed reaction is a cis-3-alkyl-4-alkyloxetan-2-one = a cis-alkene + CO2. Its function is as follows. Involved in olefin biosynthesis. Catalyzes the elimination of carbon dioxide from beta-lactones to form the final olefin product. The S.oneidensis oleABCD genes produce 3,6,9,12,15,19,22,25,28-hentriacontanonaene, which may aid the cells in adapting to a sudden drop in temperature. The protein is Cis-3-alkyl-4-alkyloxetan-2-one decarboxylase of Shewanella oneidensis (strain ATCC 700550 / JCM 31522 / CIP 106686 / LMG 19005 / NCIMB 14063 / MR-1).